Reading from the N-terminus, the 325-residue chain is Hydroxymethylglutaryl-CoA lyase, mitochondrial (325 aa).

The transit peptide at methionine 1–glycine 27 directs the protein to the mitochondrion. Residues valine 33–leucine 300 form the Pyruvate carboxyltransferase domain. Arginine 41 serves as a coordination point for substrate. Aspartate 42 is a binding site for a divalent metal cation. The residue at position 48 (lysine 48) is an N6-acetyllysine; alternate. Residue lysine 48 is modified to N6-succinyllysine; alternate. At lysine 111 the chain carries N6-acetyllysine. Lysine 137 and lysine 179 each carry N6-acetyllysine; alternate. 2 positions are modified to N6-succinyllysine; alternate: lysine 137 and lysine 179. Positions 233 and 235 each coordinate a divalent metal cation. Residue cysteine 266 is part of the active site. Asparagine 275 is a binding site for a divalent metal cation. Residues cysteine 323–leucine 325 carry the Microbody targeting signal motif. N6-acetyllysine is present on lysine 324.

This sequence belongs to the HMG-CoA lyase family. Homodimer; disulfide-linked. Can also form homotetramers.

It is found in the mitochondrion matrix. The protein resides in the peroxisome. The enzyme catalyses (3S)-3-hydroxy-3-methylglutaryl-CoA = acetoacetate + acetyl-CoA. It functions in the pathway metabolic intermediate metabolism; (S)-3-hydroxy-3-methylglutaryl-CoA degradation; acetoacetate from (S)-3-hydroxy-3-methylglutaryl-CoA: step 1/1. In terms of biological role, mitochondrial 3-hydroxy-3-methylglutaryl-CoA lyase that catalyzes a cation-dependent cleavage of (S)-3-hydroxy-3-methylglutaryl-CoA into acetyl-CoA and acetoacetate, a key step in ketogenesis. Terminal step in leucine catabolism. Ketone bodies (beta-hydroxybutyrate, acetoacetate and acetone) are essential as an alternative source of energy to glucose, as lipid precursors and as regulators of metabolism. The polypeptide is Hydroxymethylglutaryl-CoA lyase, mitochondrial (Hmgcl) (Mus musculus (Mouse)).